A 47-amino-acid chain; its full sequence is Defensin-2 (47 aa).

Intrachain disulfides connect cysteine 3–cysteine 47, cysteine 14–cysteine 35, cysteine 20–cysteine 41, and cysteine 24–cysteine 43.

The protein belongs to the DEFL family. In terms of tissue distribution, epidermis and vascular bundles of pods, stems, roots, leaves and wet or dry seeds.

Its function is as follows. Possesses antifungal activity sensitive to inorganic cations. This Pisum sativum (Garden pea) protein is Defensin-2.